The following is a 300-amino-acid chain: Ribosome-inactivating protein 3 (300 aa).

The active site involves Glu-207.

Belongs to the ribosome-inactivating protein family. Type 1 RIP subfamily. As to quaternary structure, monomer. Accumulates to high levels in seeds.

Its subcellular location is the cytoplasm. It carries out the reaction Endohydrolysis of the N-glycosidic bond at one specific adenosine on the 28S rRNA.. Functionally, possesses features of some constitutive defense agent. The coordinate Opaque-2-controlled synthesis of this protein and the major seed storage proteins (zeins) may provide the germinating seedling with both nutritional benefits and protection against pathogen invasion of the surrounding endosperm. This Zea mays (Maize) protein is Ribosome-inactivating protein 3 (CRIP3).